The following is a 78-amino-acid chain: UPF0335 protein RP113 (78 aa).

This sequence belongs to the UPF0335 family.

The chain is UPF0335 protein RP113 from Rickettsia prowazekii (strain Madrid E).